The following is a 217-amino-acid chain: Thymidylate kinase (217 aa).

7–14 (GIEGTGKT) contacts ATP.

Belongs to the thymidylate kinase family.

It catalyses the reaction dTMP + ATP = dTDP + ADP. Functionally, phosphorylation of dTMP to form dTDP in both de novo and salvage pathways of dTTP synthesis. In Maridesulfovibrio salexigens (strain ATCC 14822 / DSM 2638 / NCIMB 8403 / VKM B-1763) (Desulfovibrio salexigens), this protein is Thymidylate kinase.